A 164-amino-acid polypeptide reads, in one-letter code: MD-2-related lipid-recognition protein 3 (164 aa).

Residues 1 to 24 form the signal peptide; it reads MAMSHVQPMLLLLVSLFFLPALRG.

Interacts with RUB1/NEDD8. In terms of processing, neddylated. Ubiquitinated.

It is found in the vacuole. It localises to the endoplasmic reticulum. Its function is as follows. May be involved in herbivory-mediated responses. May play a role in herbivory-associated molecular pattern (HAMP) recognition. May function is jasmonate (JA) signaling in response to HAMP. May play a role in defense response against the pathogens Altenaria brassicicola and Pseudomonas syringae. The sequence is that of MD-2-related lipid-recognition protein 3 from Arabidopsis thaliana (Mouse-ear cress).